Consider the following 510-residue polypeptide: MERELVIVVDFGGQYNQLIARRVRENNVYCEIVPYTYSVDKIKEKNPRGIIFTGGPNSVYDDNAPKISEDIFEIGVPVLGICYGHQLICTTLGGKVESAQVREYGKTDVVLNNSSGLFSGIDKNESCWMSHTDFVSYPPEGFKIIGKSGESPVAAVENIDKKIYGVQFHPEVEHTPFGKKMLSNFLFDICNLKGDWSMSSFVDEKIKSIKEEVGDKKVICAMSGGVDSSVAAMIVHKAVGKQLTCIFVDHGLLRKDEGDQVEDIFKKQFNMNFIRVNAEKRFLQKLKDISDPEKKRKIIGEEFIRVFEEEAKKLGEIAFLVQGTIYPDVVESGLGTSATIKSHHNVGGLPEDMDFKLIEPLRELFKDEVRAVGEELGIPHKLVWRQPFPGPGLAIRVLGNITEEKLQITRDADAIFREEIAKANLDETIWQYFACLPNIRSVGVMGDERTYCYTIALRAVISTDAMTSDWARIPYEVLDKVSRRIVNEVKGVNRIVYDITSKPPATIEWE.

Residues 5–195 (LVIVVDFGGQ…LFDICNLKGD (191 aa)) enclose the Glutamine amidotransferase type-1 domain. Residue cysteine 82 is the Nucleophile of the active site. Residues histidine 169 and glutamate 171 contribute to the active site. A GMPS ATP-PPase domain is found at 196–385 (WSMSSFVDEK…LGIPHKLVWR (190 aa)). 223–229 (SGGVDSS) contributes to the ATP binding site.

Homodimer.

The catalysed reaction is XMP + L-glutamine + ATP + H2O = GMP + L-glutamate + AMP + diphosphate + 2 H(+). The protein operates within purine metabolism; GMP biosynthesis; GMP from XMP (L-Gln route): step 1/1. In terms of biological role, catalyzes the synthesis of GMP from XMP. The chain is GMP synthase [glutamine-hydrolyzing] from Clostridium kluyveri (strain NBRC 12016).